The sequence spans 248 residues: 3-deoxy-manno-octulosonate cytidylyltransferase (248 aa).

The protein belongs to the KdsB family.

Its subcellular location is the cytoplasm. It carries out the reaction 3-deoxy-alpha-D-manno-oct-2-ulosonate + CTP = CMP-3-deoxy-beta-D-manno-octulosonate + diphosphate. It functions in the pathway nucleotide-sugar biosynthesis; CMP-3-deoxy-D-manno-octulosonate biosynthesis; CMP-3-deoxy-D-manno-octulosonate from 3-deoxy-D-manno-octulosonate and CTP: step 1/1. Its pathway is bacterial outer membrane biogenesis; lipopolysaccharide biosynthesis. Activates KDO (a required 8-carbon sugar) for incorporation into bacterial lipopolysaccharide in Gram-negative bacteria. This Escherichia coli O127:H6 (strain E2348/69 / EPEC) protein is 3-deoxy-manno-octulosonate cytidylyltransferase.